A 138-amino-acid chain; its full sequence is Large ribosomal subunit protein uL16 (138 aa).

Residues 1–17 show a composition bias toward basic residues; that stretch reads MLIPRKVKHRKQHHPRQ. Residues 1–24 are disordered; it reads MLIPRKVKHRKQHHPRQRGIASGG.

It belongs to the universal ribosomal protein uL16 family. In terms of assembly, part of the 50S ribosomal subunit.

Functionally, binds 23S rRNA and is also seen to make contacts with the A and possibly P site tRNAs. This chain is Large ribosomal subunit protein uL16, found in Mycolicibacterium gilvum (strain PYR-GCK) (Mycobacterium gilvum (strain PYR-GCK)).